The sequence spans 1384 residues: DNA-directed RNA polymerase subunit beta (1384 aa).

It belongs to the RNA polymerase beta chain family. In terms of assembly, the RNAP catalytic core consists of 2 alpha, 1 beta, 1 beta' and 1 omega subunit. When a sigma factor is associated with the core the holoenzyme is formed, which can initiate transcription.

It carries out the reaction RNA(n) + a ribonucleoside 5'-triphosphate = RNA(n+1) + diphosphate. In terms of biological role, DNA-dependent RNA polymerase catalyzes the transcription of DNA into RNA using the four ribonucleoside triphosphates as substrates. In Xylella fastidiosa (strain M12), this protein is DNA-directed RNA polymerase subunit beta.